A 330-amino-acid polypeptide reads, in one-letter code: Probable L-lactate dehydrogenase (330 aa).

The substrate site is built by R105, N137, and R168. N137 is a binding site for NAD(+). The active-site Proton acceptor is the H192.

This sequence belongs to the LDH/MDH superfamily. LDH family. In terms of assembly, homotetramer.

Its subcellular location is the cytoplasm. It catalyses the reaction (S)-lactate + NAD(+) = pyruvate + NADH + H(+). The protein operates within fermentation; pyruvate fermentation to lactate; (S)-lactate from pyruvate: step 1/1. The sequence is that of Probable L-lactate dehydrogenase from Schizosaccharomyces pombe (strain 972 / ATCC 24843) (Fission yeast).